An 86-amino-acid polypeptide reads, in one-letter code: Small ribosomal subunit protein bS20 (86 aa).

It belongs to the bacterial ribosomal protein bS20 family.

Its function is as follows. Binds directly to 16S ribosomal RNA. The polypeptide is Small ribosomal subunit protein bS20 (Bifidobacterium longum subsp. infantis (strain ATCC 15697 / DSM 20088 / JCM 1222 / NCTC 11817 / S12)).